Here is a 262-residue protein sequence, read N- to C-terminus: Acyl-[acyl-carrier-protein]--UDP-N-acetylglucosamine O-acyltransferase (262 aa).

It belongs to the transferase hexapeptide repeat family. LpxA subfamily. In terms of assembly, homotrimer.

The protein resides in the cytoplasm. The enzyme catalyses a (3R)-hydroxyacyl-[ACP] + UDP-N-acetyl-alpha-D-glucosamine = a UDP-3-O-[(3R)-3-hydroxyacyl]-N-acetyl-alpha-D-glucosamine + holo-[ACP]. It participates in glycolipid biosynthesis; lipid IV(A) biosynthesis; lipid IV(A) from (3R)-3-hydroxytetradecanoyl-[acyl-carrier-protein] and UDP-N-acetyl-alpha-D-glucosamine: step 1/6. Functionally, involved in the biosynthesis of lipid A, a phosphorylated glycolipid that anchors the lipopolysaccharide to the outer membrane of the cell. This is Acyl-[acyl-carrier-protein]--UDP-N-acetylglucosamine O-acyltransferase from Histophilus somni (strain 129Pt) (Haemophilus somnus).